We begin with the raw amino-acid sequence, 180 residues long: Acireductone dioxygenase (180 aa).

Positions 97, 99, 103, and 141 each coordinate Fe(2+). Residues His97, His99, Glu103, and His141 each coordinate Ni(2+).

This sequence belongs to the acireductone dioxygenase (ARD) family. In terms of assembly, monomer. Requires Fe(2+) as cofactor. Ni(2+) serves as cofactor.

The catalysed reaction is 1,2-dihydroxy-5-(methylsulfanyl)pent-1-en-3-one + O2 = 3-(methylsulfanyl)propanoate + CO + formate + 2 H(+). The enzyme catalyses 1,2-dihydroxy-5-(methylsulfanyl)pent-1-en-3-one + O2 = 4-methylsulfanyl-2-oxobutanoate + formate + 2 H(+). Its pathway is amino-acid biosynthesis; L-methionine biosynthesis via salvage pathway; L-methionine from S-methyl-5-thio-alpha-D-ribose 1-phosphate: step 5/6. Its function is as follows. Catalyzes 2 different reactions between oxygen and the acireductone 1,2-dihydroxy-3-keto-5-methylthiopentene (DHK-MTPene) depending upon the metal bound in the active site. Fe-containing acireductone dioxygenase (Fe-ARD) produces formate and 2-keto-4-methylthiobutyrate (KMTB), the alpha-ketoacid precursor of methionine in the methionine recycle pathway. Ni-containing acireductone dioxygenase (Ni-ARD) produces methylthiopropionate, carbon monoxide and formate, and does not lie on the methionine recycle pathway. This Yersinia pseudotuberculosis serotype O:1b (strain IP 31758) protein is Acireductone dioxygenase.